The following is a 354-amino-acid chain: Rhodopsin (354 aa).

The Extracellular portion of the chain corresponds to M1 to A36. N-linked (GlcNAc...) asparagine glycans are attached at residues N2 and N15. A helical transmembrane segment spans residues Y37–V61. Over T62–N73 the chain is Cytoplasmic. The helical transmembrane segment at Y74–Y96 threads the bilayer. Residues T97–C110 are Extracellular-facing. A disulfide bond links C110 and C187. The helical transmembrane segment at N111–I133 threads the bilayer. A 'Ionic lock' involved in activated form stabilization motif is present at residues E134 to W136. Residues E134–H152 lie on the Cytoplasmic side of the membrane. The chain crosses the membrane as a helical span at residues A153–V173. The Extracellular portion of the chain corresponds to G174–S202. The chain crosses the membrane as a helical span at residues F203–G224. Residues R225–R252 are Cytoplasmic-facing. Residues M253–Y274 form a helical membrane-spanning segment. Over I275 to L286 the chain is Extracellular. A helical transmembrane segment spans residues F287–C308. K296 carries the post-translational modification N6-(retinylidene)lysine. The Cytoplasmic portion of the chain corresponds to M309–A354. Residues C322 and C323 are each lipidated (S-palmitoyl cysteine). The disordered stretch occupies residues E332–A354. Over residues A334–A354 the composition is skewed to low complexity.

Belongs to the G-protein coupled receptor 1 family. Opsin subfamily. Post-translationally, phosphorylated on some or all of the serine and threonine residues present in the C-terminal region. Contains one covalently linked retinal chromophore.

The protein localises to the membrane. The protein resides in the cell projection. It localises to the cilium. It is found in the photoreceptor outer segment. Functionally, photoreceptor required for image-forming vision at low light intensity. While most salt water fish species use retinal as chromophore, most freshwater fish use 3-dehydroretinal, or a mixture of retinal and 3-dehydroretinal. Light-induced isomerization of 11-cis to all-trans retinal triggers a conformational change that activates signaling via G-proteins. Subsequent receptor phosphorylation mediates displacement of the bound G-protein alpha subunit by arrestin and terminates signaling. This Oryzias latipes (Japanese rice fish) protein is Rhodopsin (rho).